We begin with the raw amino-acid sequence, 325 residues long: Interleukin-10 receptor subunit beta (325 aa).

The signal sequence occupies residues 1–19; the sequence is MAWSLGSWLGGCLLVSALG. Residues 20 to 220 are Extracellular-facing; it reads MVPPPENVRM…QTTHDETVPS (201 aa). Fibronectin type-III domains lie at 23-111 and 114-216; these read PPEN…VDDT and GPPG…THDE. N-linked (GlcNAc...) asparagine glycosylation is found at Asn-49, Asn-68, Asn-102, and Asn-161. Residues Cys-66 and Cys-74 are joined by a disulfide bond. Cys-188 and Cys-209 form a disulfide bridge. A helical transmembrane segment spans residues 221–242; the sequence is WMVAVILMASVFMVCLALLGCF. At 243 to 325 the chain is on the cytoplasmic side; it reads ALLWCVYKKT…GTPPGQGPQS (83 aa). Positions 301 to 325 are disordered; it reads DSESGKQNPGDSCSLGTPPGQGPQS. The span at 305-315 shows a compositional bias: polar residues; the sequence is GKQNPGDSCSL.

This sequence belongs to the type II cytokine receptor family. In terms of assembly, heterodimer with IFNLR1.

It localises to the membrane. Shared cell surface receptor required for the activation of five class 2 cytokines: IL10, IL22, IL26, IL28, and IFNL1. The IFNLR1/IL10RB dimer is a receptor for the cytokine ligands IFNL2 and IFNL3 and mediates their antiviral activity. The ligand/receptor complex stimulate the activation of the JAK/STAT signaling pathway leading to the expression of IFN-stimulated genes (ISG), which contribute to the antiviral state. The polypeptide is Interleukin-10 receptor subunit beta (IL10RB) (Homo sapiens (Human)).